The following is a 176-amino-acid chain: Small ribosomal subunit protein uS4 (176 aa).

Residues 104 to 166 form the S4 RNA-binding domain; the sequence is RRLQTIVYKK…PTSPFKQNPP (63 aa).

It belongs to the universal ribosomal protein uS4 family. Part of the 30S ribosomal subunit. Contacts protein S5. The interaction surface between S4 and S5 is involved in control of translational fidelity.

Its function is as follows. One of the primary rRNA binding proteins, it binds directly to 16S rRNA where it nucleates assembly of the body of the 30S subunit. In terms of biological role, with S5 and S12 plays an important role in translational accuracy. The sequence is that of Small ribosomal subunit protein uS4 (rps4) from Sulfolobus acidocaldarius (strain ATCC 33909 / DSM 639 / JCM 8929 / NBRC 15157 / NCIMB 11770).